The following is a 179-amino-acid chain: Translation initiation factor IF-3 (179 aa).

The protein belongs to the IF-3 family. Monomer.

It is found in the cytoplasm. Functionally, IF-3 binds to the 30S ribosomal subunit and shifts the equilibrium between 70S ribosomes and their 50S and 30S subunits in favor of the free subunits, thus enhancing the availability of 30S subunits on which protein synthesis initiation begins. This is Translation initiation factor IF-3 from Proteus hauseri.